A 360-amino-acid polypeptide reads, in one-letter code: Nucleoporin SEH1 (360 aa).

WD repeat units follow at residues 10 to 49 (DHKD…DWHC), 55 to 96 (THSG…SNDK), 111 to 152 (DSRT…NLSQ), 160 to 210 (SCKL…RKYA), 217 to 258 (TVTD…KELT), and 276 to 315 (NHNS…NWKC). Lys-12 participates in a covalent cross-link: Glycyl lysine isopeptide (Lys-Gly) (interchain with G-Cter in SUMO2). Phosphoserine is present on residues Ser-179 and Ser-190. Residues 324–354 (SPVNGSSQQGTSNPSLGSNIPSLQNSLNGSS) show a composition bias toward polar residues. A disordered region spans residues 324–360 (SPVNGSSQQGTSNPSLGSNIPSLQNSLNGSSAGRKHS).

The protein belongs to the WD repeat SEC13 family. In terms of assembly, component of the Nup107-160 subcomplex of the nuclear pore complex (NPC). The Nup107-160 subcomplex includes NUP160, NUP133, NUP107, NUP98, NUP85, NUP43, NUP37, SEH1 and SEC13. The SEH1 subunit appears to be only weakly associated with the Nup107-160 subcomplex. Component of the GATOR2 subcomplex, composed of MIOS, SEC13, SEH1L, WDR24 and WDR59. The GATOR2 complex interacts with CASTOR1 and CASTOR2; the interaction is negatively regulated by arginine. The GATOR2 complex interacts with SESN1, SESN2 and SESN3; the interaction is negatively regulated by amino acids. SESN1, SESN2 and SESN3 convey leucine availability via direct interaction with SEH1L and WDR24.

The protein localises to the chromosome. Its subcellular location is the centromere. The protein resides in the kinetochore. It is found in the nucleus. It localises to the nuclear pore complex. The protein localises to the lysosome membrane. The GATOR2 complex is negatively regulated by the upstream amino acid sensors CASTOR1 and SESN2, which sequester the GATOR2 complex in absence of amino acids. In the presence of abundant amino acids, GATOR2 is released from CASTOR1 and SESN2 and activated. In terms of biological role, component of the Nup107-160 subcomplex of the nuclear pore complex (NPC). The Nup107-160 subcomplex is required for the assembly of a functional NPC. The Nup107-160 subcomplex is also required for normal kinetochore microtubule attachment, mitotic progression and chromosome segregation. This subunit plays a role in recruitment of the Nup107-160 subcomplex to the kinetochore. Functionally, as a component of the GATOR2 complex, functions as an activator of the amino acid-sensing branch of the mTORC1 signaling pathway. The GATOR2 complex indirectly activates mTORC1 through the inhibition of the GATOR1 subcomplex. GATOR2 probably acts as an E3 ubiquitin-protein ligase toward GATOR1. In the presence of abundant amino acids, the GATOR2 complex mediates ubiquitination of the NPRL2 core component of the GATOR1 complex, leading to GATOR1 inactivation. In the absence of amino acids, GATOR2 is inhibited, activating the GATOR1 complex. Within the GATOR2 complex, SEC13 and SEH1L are required to stabilize the complex. The chain is Nucleoporin SEH1 (SEH1L) from Pongo abelii (Sumatran orangutan).